The chain runs to 259 residues: Deoxyribose-phosphate aldolase (259 aa).

Aspartate 102 (proton donor/acceptor) is an active-site residue. The active-site Schiff-base intermediate with acetaldehyde is lysine 167. Catalysis depends on lysine 201, which acts as the Proton donor/acceptor.

The protein belongs to the DeoC/FbaB aldolase family. DeoC type 2 subfamily.

The protein localises to the cytoplasm. The catalysed reaction is 2-deoxy-D-ribose 5-phosphate = D-glyceraldehyde 3-phosphate + acetaldehyde. It participates in carbohydrate degradation; 2-deoxy-D-ribose 1-phosphate degradation; D-glyceraldehyde 3-phosphate and acetaldehyde from 2-deoxy-alpha-D-ribose 1-phosphate: step 2/2. Functionally, catalyzes a reversible aldol reaction between acetaldehyde and D-glyceraldehyde 3-phosphate to generate 2-deoxy-D-ribose 5-phosphate. This chain is Deoxyribose-phosphate aldolase, found in Shigella boydii serotype 4 (strain Sb227).